The sequence spans 271 residues: Bifunctional protein FolD (271 aa).

NADP(+) is bound by residues 154–156 (GRS), Ser-181, and Ile-222.

The protein belongs to the tetrahydrofolate dehydrogenase/cyclohydrolase family. Homodimer.

It carries out the reaction (6R)-5,10-methylene-5,6,7,8-tetrahydrofolate + NADP(+) = (6R)-5,10-methenyltetrahydrofolate + NADPH. It catalyses the reaction (6R)-5,10-methenyltetrahydrofolate + H2O = (6R)-10-formyltetrahydrofolate + H(+). The protein operates within one-carbon metabolism; tetrahydrofolate interconversion. Catalyzes the oxidation of 5,10-methylenetetrahydrofolate to 5,10-methenyltetrahydrofolate and then the hydrolysis of 5,10-methenyltetrahydrofolate to 10-formyltetrahydrofolate. The chain is Bifunctional protein FolD from Thermotoga petrophila (strain ATCC BAA-488 / DSM 13995 / JCM 10881 / RKU-1).